Reading from the N-terminus, the 90-residue chain is Probable Fe(2+)-trafficking protein (90 aa).

It belongs to the Fe(2+)-trafficking protein family.

Functionally, could be a mediator in iron transactions between iron acquisition and iron-requiring processes, such as synthesis and/or repair of Fe-S clusters in biosynthetic enzymes. The polypeptide is Probable Fe(2+)-trafficking protein (Methylococcus capsulatus (strain ATCC 33009 / NCIMB 11132 / Bath)).